Reading from the N-terminus, the 92-residue chain is LYR motif-containing protein 4 homolog (92 aa).

Residues 40 to 68 (ANKAIRDFAEIDRQMEAGKQNLELIRRQV) adopt a coiled-coil conformation.

It belongs to the complex I LYR family. As to quaternary structure, component of the mitochondrial core iron-sulfur cluster (ISC) assembly complex at least composed of the cysteine desulfurase Nfs1, the scaffold protein IscU, the accessory protein bcn92/Isd11/Lyrm4, and probably fh/frataxin. Interacts with Nfs1.

It is found in the mitochondrion. Stabilizing factor of the core iron-sulfur cluster (ISC) assembly complex that regulates the stability and cysteine desulfurase activity of Nfs1 and participates in the [2Fe-2S] clusters assembly on the scaffolding protein IscU. This is LYR motif-containing protein 4 homolog from Drosophila subobscura (Fruit fly).